The chain runs to 234 residues: Sperm-associated microtubule inner protein 5 (234 aa).

In terms of assembly, microtubule inner protein component of sperm flagellar doublet microtubules. In terms of tissue distribution, expressed in testis (at protein level). Strongly expressed in peritubular cells and Leydig cells and weakly expressed in the cytoplasm of spermatocytes.

It localises to the cytoplasm. The protein localises to the cytoskeleton. The protein resides in the flagellum axoneme. Its subcellular location is the nucleus. Its function is as follows. Microtubule inner protein (MIP) part of the dynein-decorated doublet microtubules (DMTs) in flagellum axoneme. May serve to reinforce and thus stabilize the microtubule structure in the sperm flagella. The polypeptide is Sperm-associated microtubule inner protein 5 (Homo sapiens (Human)).